Here is a 380-residue protein sequence, read N- to C-terminus: 4-hydroxy-3-methylbut-2-en-1-yl diphosphate synthase (flavodoxin) (380 aa).

Residues C273, C276, C308, and E315 each contribute to the [4Fe-4S] cluster site.

Belongs to the IspG family. Requires [4Fe-4S] cluster as cofactor.

The enzyme catalyses (2E)-4-hydroxy-3-methylbut-2-enyl diphosphate + oxidized [flavodoxin] + H2O + 2 H(+) = 2-C-methyl-D-erythritol 2,4-cyclic diphosphate + reduced [flavodoxin]. Its pathway is isoprenoid biosynthesis; isopentenyl diphosphate biosynthesis via DXP pathway; isopentenyl diphosphate from 1-deoxy-D-xylulose 5-phosphate: step 5/6. Functionally, converts 2C-methyl-D-erythritol 2,4-cyclodiphosphate (ME-2,4cPP) into 1-hydroxy-2-methyl-2-(E)-butenyl 4-diphosphate. This chain is 4-hydroxy-3-methylbut-2-en-1-yl diphosphate synthase (flavodoxin), found in Leifsonia xyli subsp. xyli (strain CTCB07).